Here is a 100-residue protein sequence, read N- to C-terminus: Integration host factor subunit alpha (100 aa).

It belongs to the bacterial histone-like protein family. Heterodimer of an alpha and a beta chain.

Functionally, this protein is one of the two subunits of integration host factor, a specific DNA-binding protein that functions in genetic recombination as well as in transcriptional and translational control. This is Integration host factor subunit alpha from Jannaschia sp. (strain CCS1).